The sequence spans 234 residues: Glucosamine-6-phosphate deaminase (234 aa).

The Proton acceptor; for enolization step role is filled by Asp63. Catalysis depends on Asn129, which acts as the For ring-opening step. His131 functions as the Proton acceptor; for ring-opening step in the catalytic mechanism. The active-site For ring-opening step is Glu136.

The protein belongs to the glucosamine/galactosamine-6-phosphate isomerase family. NagB subfamily.

It carries out the reaction alpha-D-glucosamine 6-phosphate + H2O = beta-D-fructose 6-phosphate + NH4(+). The protein operates within amino-sugar metabolism; N-acetylneuraminate degradation; D-fructose 6-phosphate from N-acetylneuraminate: step 5/5. In terms of biological role, catalyzes the reversible isomerization-deamination of glucosamine 6-phosphate (GlcN6P) to form fructose 6-phosphate (Fru6P) and ammonium ion. In Listeria innocua serovar 6a (strain ATCC BAA-680 / CLIP 11262), this protein is Glucosamine-6-phosphate deaminase.